The sequence spans 142 residues: Protein SprT-like (142 aa).

The 135-residue stretch at tyrosine 4–leucine 138 folds into the SprT-like domain. Histidine 62 serves as a coordination point for Zn(2+). Glutamate 63 is a catalytic residue. Residue histidine 66 participates in Zn(2+) binding.

This sequence belongs to the SprT family. Requires Zn(2+) as cofactor.

The protein resides in the cytoplasm. This Streptococcus agalactiae serotype Ia (strain ATCC 27591 / A909 / CDC SS700) protein is Protein SprT-like.